Reading from the N-terminus, the 325-residue chain is Probable transcription factor At4g01260 (325 aa).

Positions 1-98 are disordered; sequence MAPKQLKKIE…SMGEEDVKKK (98 aa). Low complexity-rich tracts occupy residues 23-32 and 49-69; these read ASSGESATSG and KPVV…ESST. Over residues 73–83 the composition is skewed to basic and acidic residues; the sequence is RSFEKTDEMSK.

The protein belongs to the GeBP family.

The polypeptide is Probable transcription factor At4g01260 (Arabidopsis thaliana (Mouse-ear cress)).